A 641-amino-acid polypeptide reads, in one-letter code: Macrolide export ATP-binding/permease protein MacB (641 aa).

The ABC transporter domain occupies 2 to 236; it reads IFLKNICKNI…LTLKTMSKEK (235 aa). Position 34–41 (34–41) interacts with ATP; that stretch reads GQSGSGKT. 4 helical membrane-spanning segments follow: residues 265–285, 519–539, 571–591, and 604–624; these read ILTM…VALG, ACVA…IMLV, MICT…IFAF, and AYSV…FGFF.

The protein belongs to the ABC transporter superfamily. Macrolide exporter (TC 3.A.1.122) family. In terms of assembly, homodimer.

It is found in the cell inner membrane. Non-canonical ABC transporter that contains transmembrane domains (TMD), which form a pore in the inner membrane, and an ATP-binding domain (NBD), which is responsible for energy generation. Confers resistance against macrolides. This Campylobacter jejuni subsp. jejuni serotype O:23/36 (strain 81-176) protein is Macrolide export ATP-binding/permease protein MacB.